A 411-amino-acid polypeptide reads, in one-letter code: Arginine deiminase 1 (411 aa).

C401 functions as the Amidino-cysteine intermediate in the catalytic mechanism.

The protein belongs to the arginine deiminase family.

The protein resides in the cytoplasm. The enzyme catalyses L-arginine + H2O = L-citrulline + NH4(+). It functions in the pathway amino-acid degradation; L-arginine degradation via ADI pathway; carbamoyl phosphate from L-arginine: step 1/2. The polypeptide is Arginine deiminase 1 (arcA1) (Staphylococcus epidermidis (strain ATCC 12228 / FDA PCI 1200)).